We begin with the raw amino-acid sequence, 485 residues long: UDP-N-acetylmuramate--L-alanine ligase (485 aa).

129–135 (GTHGKTT) is a binding site for ATP.

It belongs to the MurCDEF family.

The protein localises to the cytoplasm. It catalyses the reaction UDP-N-acetyl-alpha-D-muramate + L-alanine + ATP = UDP-N-acetyl-alpha-D-muramoyl-L-alanine + ADP + phosphate + H(+). It participates in cell wall biogenesis; peptidoglycan biosynthesis. Cell wall formation. The sequence is that of UDP-N-acetylmuramate--L-alanine ligase from Vibrio parahaemolyticus serotype O3:K6 (strain RIMD 2210633).